A 607-amino-acid chain; its full sequence is All-trans-retinol 13,14-reductase (607 aa).

Positions 1–22 are cleaved as a signal peptide; it reads MWFAVVAIFLALVAFLYRYVVG.

This sequence belongs to the carotenoid/retinoid oxidoreductase family. CrtISO subfamily. The cofactor is NAD(+). It depends on NADP(+) as a cofactor. FAD serves as cofactor.

The protein localises to the endoplasmic reticulum membrane. It carries out the reaction all-trans-13,14-dihydroretinol + A = all-trans-retinol + AH2. Catalyzes the saturation of all-trans-retinol to all-trans-13,14-dihydroretinol. In addition, saturates the 7-8 double bond of all-trans-retinol to produce all-trans-7,8-dihydroretinol. Can also use vitamin A2 (all-trans-3,4-didehydroretinol) as a substrate, to produce all-trans-13,14-dihydro-3,4-didehydroretinol or all-trans-7,8-dihydro-3,4-didehydroretinol. May play a role in vitamin A metabolism. This is All-trans-retinol 13,14-reductase from Danio rerio (Zebrafish).